The following is a 237-amino-acid chain: Ribose-5-phosphate isomerase A (237 aa).

Substrate is bound by residues 33 to 36 (TGST), 88 to 91 (DGAD), and 101 to 104 (KGRG). The Proton acceptor role is filled by Glu110. Residue Lys128 coordinates substrate.

Belongs to the ribose 5-phosphate isomerase family. As to quaternary structure, homodimer.

It catalyses the reaction aldehydo-D-ribose 5-phosphate = D-ribulose 5-phosphate. It participates in carbohydrate degradation; pentose phosphate pathway; D-ribose 5-phosphate from D-ribulose 5-phosphate (non-oxidative stage): step 1/1. In terms of biological role, catalyzes the reversible conversion of ribose-5-phosphate to ribulose 5-phosphate. This chain is Ribose-5-phosphate isomerase A, found in Methanoregula boonei (strain DSM 21154 / JCM 14090 / 6A8).